The primary structure comprises 1364 residues: Collagen alpha-2(I) chain (1364 aa).

An N-terminal signal peptide occupies residues 1–22 (MLSFVDTRTLLLLAVTSCLATC). Pyrrolidone carboxylic acid is present on Q23. The propeptide at 23–79 (QSLQEATARKGPSGDRGPRGERGPPGPPGRDGDDGIPGPPGPPGPPGPPGLGGNFAA) is N-terminal propeptide. The tract at residues 26-1128 (QEATARKGPS…QPRSPTSLRP (1103 aa)) is disordered. The span at 34 to 44 (PSGDRGPRGER) shows a compositional bias: basic and acidic residues. A compositionally biased stretch (pro residues) spans 59–71 (PGPPGPPGPPGPP). Pyrrolidone carboxylic acid is present on Q80. An Allysine modification is found at K84. Residues 93–130 (LMGPRGPPGASGAPGPQGFQGPPGEPGEPGQTGPAGAR) are compositionally biased toward low complexity. P100, P106, P115, P118, P121, P133, P136, P145, P151, P166, P169, and P172 each carry 4-hydroxyproline. The segment covering 139–153 (AGEDGHPGKPGRPGE) has biased composition (basic and acidic residues). K175 carries the post-translational modification 5-hydroxylysine; alternate. The O-linked (Gal...) hydroxylysine; alternate glycan is linked to K175. 2 positions are modified to 4-hydroxyproline: P190 and P193. 5-hydroxylysine is present on K196. 8 positions are modified to 4-hydroxyproline: P199, P202, P208, P217, P226, P253, P256, and P259. Residues 223-252 (VGAPGPAGARGSDGSVGPVGPAGPIGSAGP) show a composition bias toward low complexity. K262 carries the post-translational modification 5-hydroxylysine. P271, P286, P295, and P304 each carry 4-hydroxyproline. Low complexity predominate over residues 277 to 291 (AGPRGEVGLPGLSGP). The span at 298–319 (PGANGLPGAKGAAGLPGVAGAP) shows a compositional bias: low complexity. K307 carries the post-translational modification 5-hydroxylysine. A 4-hydroxyproline mark is found at P313, P319, P322, P328, and P346. The segment covering 328-343 (PGPVGAAGATGARGLV) has biased composition (low complexity). K352 bears the 5-hydroxylysine mark. A 4-hydroxyproline mark is found at P361, P367, P370, P391, P394, P400, P406, P439, and P442. The segment covering 396–406 (LRGNPGSRGLP) has biased composition (low complexity). 2 stretches are compositionally biased toward low complexity: residues 468-487 (LPGIDGRPGPIGPAGARGEP) and 511-535 (AGLAGARGAPGPDGNNGAQGPPGLQ). Over residues 536-545 (GVQGGKGEQG) the composition is skewed to gly residues. Low complexity-rich tracts occupy residues 592-609 (PGESGAAGPTGPIGSRGP), 621-643 (EPGVVGAPGTAGPSGPSGLPGER), 666-688 (SPGRDGARGAPGAIGAPGPAGAN), and 715-735 (VGPAGPNGFAGPAGAAGQPGA). The span at 736 to 745 (KGERGTKGPK) shows a compositional bias: basic and acidic residues. Residues 748–763 (NGPVGPTGPVGAAGPS) show a composition bias toward low complexity. The span at 773–782 (GSRGDGGPPG) shows a compositional bias: gly residues. Low complexity-rich tracts occupy residues 783-793 (ATGFPGAAGRT), 861-874 (PQGLLGAPGFLGLP), 891-930 (EPGPLGIAGPPGARGPPGNVGNPGVNGAPGEAGRDGNPGN), 948-961 (YPGNAGPVGAAGAP), and 978-999 (EPGPAGAVGPAGAVGPRGPSGP). Over residues 1003–1014 (RGDKGEPGDKGP) the composition is skewed to basic and acidic residues. A compositionally biased stretch (pro residues) spans 1087–1101 (AGPPGPPGPPGPPGP). The propeptide at 1118-1364 (DQPRSPTSLR…RLNIGPVCFK (247 aa)) is C-terminal propeptide. The region spanning 1131-1364 (YEVDATLKSL…RLNIGPVCFK (234 aa)) is the Fibrillar collagen NC1 domain. 3 disulfide bridges follow: C1161–C1193, C1201–C1362, and C1270–C1315. Ca(2+) is bound by residues D1179, N1181, Q1182, C1184, and D1187. A glycan (N-linked (GlcNAc...) asparagine) is linked at N1265.

The protein belongs to the fibrillar collagen family. In terms of assembly, trimers of one alpha 2(I) and two alpha 1(I) chains. Interacts (via C-terminus) with TMEM131 (via PapD-L domain); the interaction is direct and is involved in assembly and TRAPPIII ER-to-Golgi transport complex-dependent secretion of collagen. Post-translationally, prolines at the third position of the tripeptide repeating unit (G-X-Y) are hydroxylated in some or all of the chains. Forms the fibrils of tendon, ligaments and bones. In bones the fibrils are mineralized with calcium hydroxyapatite.

Its subcellular location is the secreted. It localises to the extracellular space. The protein resides in the extracellular matrix. Its function is as follows. Type I collagen is a member of group I collagen (fibrillar forming collagen). This is Collagen alpha-2(I) chain (COL1A2) from Bos taurus (Bovine).